Here is a 209-residue protein sequence, read N- to C-terminus: 2-phospho-L-lactate guanylyltransferase (209 aa).

This sequence belongs to the CofC family. Homodimer.

The catalysed reaction is (2S)-2-phospholactate + GTP + H(+) = (2S)-lactyl-2-diphospho-5'-guanosine + diphosphate. Its pathway is cofactor biosynthesis; coenzyme F420 biosynthesis. Functionally, guanylyltransferase that catalyzes the activation of (2S)-2-phospholactate (2-PL) as (2S)-lactyl-2-diphospho-5'-guanosine, via the condensation of 2-PL with GTP. It is involved in the biosynthesis of coenzyme F420, a hydride carrier cofactor. In Halobacterium salinarum (strain ATCC 29341 / DSM 671 / R1), this protein is 2-phospho-L-lactate guanylyltransferase.